Consider the following 134-residue polypeptide: Glycine cleavage system H protein (134 aa).

The Lipoyl-binding domain occupies 24–106 (TVRVGITDYA…YGAGWLLDIQ (83 aa)). Lys65 is subject to N6-lipoyllysine.

Belongs to the GcvH family. The glycine cleavage system is composed of four proteins: P, T, L and H. (R)-lipoate is required as a cofactor.

Its function is as follows. The glycine cleavage system catalyzes the degradation of glycine. The H protein shuttles the methylamine group of glycine from the P protein to the T protein. This is Glycine cleavage system H protein from Mycobacterium bovis (strain ATCC BAA-935 / AF2122/97).